A 293-amino-acid chain; its full sequence is Ribosomal protein L11 methyltransferase (293 aa).

S-adenosyl-L-methionine contacts are provided by Thr-145, Gly-166, Asp-188, and Asn-230.

Belongs to the methyltransferase superfamily. PrmA family.

Its subcellular location is the cytoplasm. The enzyme catalyses L-lysyl-[protein] + 3 S-adenosyl-L-methionine = N(6),N(6),N(6)-trimethyl-L-lysyl-[protein] + 3 S-adenosyl-L-homocysteine + 3 H(+). Functionally, methylates ribosomal protein L11. The sequence is that of Ribosomal protein L11 methyltransferase from Escherichia coli O7:K1 (strain IAI39 / ExPEC).